Reading from the N-terminus, the 360-residue chain is MFVDSVEIIIASGKGGPGMVSFRREKFVIKGGPDGGDGGDGGDVYFEVDNNTDTLASFRGTKHHKAKNGAPGGTRNCAGKKGEDKIIVVPPGTQVFVGDELWLDLVEPKERVLALKGGKGGLGNAHFKSATKQQPTYAQKGLEGVEKCVRLELKLIADIGLVGFPNAGKSTLISTISNAKPKIANYEFTTLVPNLGVVSVDEKSEFLMADIPGIIEGASEGKGLGISFLKHIERTKVLAFVLDASRLDLGIKEQYKRLRLELEKFSPTLANKPFGVLLNKCDVVENINEMTKDFCAFLNLEAQKLNAFDLEPYLGFLHPNLTSDFENNPNEQSALFVLPLSAVSALNTHALKFVLLKALQ.

An Obg domain is found at 1 to 156; that stretch reads MFVDSVEIII…KCVRLELKLI (156 aa). The OBG-type G domain maps to 157-360; sequence ADIGLVGFPN…LKFVLLKALQ (204 aa). GTP is bound by residues 163–170, 188–192, 210–213, 279–282, and 341–343; these read GFPNAGKS, FTTLV, DIPG, NKCD, and SAV. Residues serine 170 and threonine 190 each contribute to the Mg(2+) site.

The protein belongs to the TRAFAC class OBG-HflX-like GTPase superfamily. OBG GTPase family. In terms of assembly, monomer. Mg(2+) is required as a cofactor.

It is found in the cytoplasm. In terms of biological role, an essential GTPase which binds GTP, GDP and possibly (p)ppGpp with moderate affinity, with high nucleotide exchange rates and a fairly low GTP hydrolysis rate. Plays a role in control of the cell cycle, stress response, ribosome biogenesis and in those bacteria that undergo differentiation, in morphogenesis control. In Helicobacter pylori (strain J99 / ATCC 700824) (Campylobacter pylori J99), this protein is GTPase Obg.